We begin with the raw amino-acid sequence, 267 residues long: MEMO1 family protein aq_890 (267 aa).

It belongs to the MEMO1 family.

This chain is MEMO1 family protein aq_890, found in Aquifex aeolicus (strain VF5).